A 95-amino-acid polypeptide reads, in one-letter code: Co-chaperonin GroES (95 aa).

Belongs to the GroES chaperonin family. In terms of assembly, heptamer of 7 subunits arranged in a ring. Interacts with the chaperonin GroEL.

Its subcellular location is the cytoplasm. In terms of biological role, together with the chaperonin GroEL, plays an essential role in assisting protein folding. The GroEL-GroES system forms a nano-cage that allows encapsulation of the non-native substrate proteins and provides a physical environment optimized to promote and accelerate protein folding. GroES binds to the apical surface of the GroEL ring, thereby capping the opening of the GroEL channel. The sequence is that of Co-chaperonin GroES from Rhizorhabdus wittichii (strain DSM 6014 / CCUG 31198 / JCM 15750 / NBRC 105917 / EY 4224 / RW1) (Sphingomonas wittichii).